The following is a 777-amino-acid chain: Androgen receptor (777 aa).

Positions 1-416 are modulating; sequence MEVHIGLGGV…IDYYFPPQKP (416 aa). 3 disordered regions span residues 53–95, 110–132, and 205–241; these read CVHP…QAPQ, GEQGGMPEEGNSESASKEGYPES, and RRAGQSTYSAGKAPEDGSSLPTEDKEQPCTDMALSEP. NR C4-type zinc fingers lie at residues 417-434 and 453-472; these read CLSCEDEASGCHYEALTC and CASRNDCTIDKFRRKNCPSC. Residues 417–489 constitute a DNA-binding region (nuclear receptor); it reads CLSCEDEASG…AGMTLGARKL (73 aa). The NR LBD domain maps to 526 to 757; that stretch reads SCQPIFLNVL…DFPEMMSEII (232 aa). Residues N563, R610, and T735 each contribute to the 17beta-hydroxy-5alpha-androstan-3-one site.

The protein belongs to the nuclear hormone receptor family. NR3 subfamily. As to quaternary structure, binds DNA as a homodimer. Interacts via the ligand-binding domain with LXXLL and FXXLF motifs from coactivator proteins. Interacts (via ligand-binding domain) with TRIM68. Detected in somatic Leydig and Sertoli cells in testis with high level expression. Also detected at lower expression levels in forebrain and heart.

It localises to the nucleus. The protein resides in the cytoplasm. In terms of biological role, steroid hormone receptors are ligand-activated transcription factors that regulate eukaryotic gene expression and affect cellular proliferation and differentiation in target tissues. Transcription factor activity is modulated by bound coactivator and corepressor proteins. The sequence is that of Androgen receptor (ar) from Aquarana catesbeiana (American bullfrog).